The primary structure comprises 519 residues: Putative cytochrome P450 CYP13A1 (519 aa).

Cysteine 465 contributes to the heme binding site.

The protein belongs to the cytochrome P450 family. Requires heme as cofactor.

Functionally, cytochromes P450 are a group of heme-thiolate monooxygenases. They oxidize a variety of structurally unrelated compounds, including steroids, fatty acids, and xenobiotics. The protein is Putative cytochrome P450 CYP13A1 (cyp-13A1) of Caenorhabditis elegans.